We begin with the raw amino-acid sequence, 485 residues long: Rhamnulokinase (485 aa).

An ATP-binding site is contributed by 8–12 (ASSGR). Substrate-binding positions include Gly78 and 231-233 (HDT). Asp232 functions as the Proton acceptor in the catalytic mechanism. ATP is bound at residue Thr254. Residue Asn291 coordinates substrate. Gln299 contacts ATP. A disulfide bond links Cys348 and Cys365. Residue Gly397 participates in ATP binding. Residues Cys408 and Cys412 are joined by a disulfide bond.

This sequence belongs to the rhamnulokinase family. Mg(2+) is required as a cofactor.

The enzyme catalyses L-rhamnulose + ATP = L-rhamnulose 1-phosphate + ADP + H(+). It functions in the pathway carbohydrate degradation; L-rhamnose degradation; glycerone phosphate from L-rhamnose: step 2/3. Its function is as follows. Involved in the catabolism of L-rhamnose (6-deoxy-L-mannose). Catalyzes the transfer of the gamma-phosphate group from ATP to the 1-hydroxyl group of L-rhamnulose to yield L-rhamnulose 1-phosphate. This Yersinia pestis bv. Antiqua (strain Angola) protein is Rhamnulokinase.